The following is a 300-amino-acid chain: Ribonuclease HIII (300 aa).

Positions 83-300 (IPIIGSDEVG…THKAQALLTK (218 aa)) constitute an RNase H type-2 domain. D89, E90, and D194 together coordinate a divalent metal cation.

The protein belongs to the RNase HII family. RnhC subfamily. Mn(2+) serves as cofactor. The cofactor is Mg(2+).

The protein localises to the cytoplasm. It carries out the reaction Endonucleolytic cleavage to 5'-phosphomonoester.. In terms of biological role, endonuclease that specifically degrades the RNA of RNA-DNA hybrids. The polypeptide is Ribonuclease HIII (Streptococcus pyogenes serotype M3 (strain ATCC BAA-595 / MGAS315)).